Here is a 326-residue protein sequence, read N- to C-terminus: o-succinylbenzoate synthase (326 aa).

The Proton donor role is filled by K110. Residues D138, E165, and D188 each coordinate Mg(2+). Catalysis depends on K212, which acts as the Proton acceptor.

This sequence belongs to the mandelate racemase/muconate lactonizing enzyme family. MenC type 1 subfamily. Requires a divalent metal cation as cofactor.

It carries out the reaction (1R,6R)-6-hydroxy-2-succinyl-cyclohexa-2,4-diene-1-carboxylate = 2-succinylbenzoate + H2O. The protein operates within quinol/quinone metabolism; 1,4-dihydroxy-2-naphthoate biosynthesis; 1,4-dihydroxy-2-naphthoate from chorismate: step 4/7. It functions in the pathway quinol/quinone metabolism; menaquinone biosynthesis. Converts 2-succinyl-6-hydroxy-2,4-cyclohexadiene-1-carboxylate (SHCHC) to 2-succinylbenzoate (OSB). The chain is o-succinylbenzoate synthase from Mycobacterium bovis (strain ATCC BAA-935 / AF2122/97).